Consider the following 294-residue polypeptide: Phosphoribosylaminoimidazole-succinocarboxamide synthase (294 aa).

Belongs to the SAICAR synthetase family.

It carries out the reaction 5-amino-1-(5-phospho-D-ribosyl)imidazole-4-carboxylate + L-aspartate + ATP = (2S)-2-[5-amino-1-(5-phospho-beta-D-ribosyl)imidazole-4-carboxamido]succinate + ADP + phosphate + 2 H(+). It participates in purine metabolism; IMP biosynthesis via de novo pathway; 5-amino-1-(5-phospho-D-ribosyl)imidazole-4-carboxamide from 5-amino-1-(5-phospho-D-ribosyl)imidazole-4-carboxylate: step 1/2. The polypeptide is Phosphoribosylaminoimidazole-succinocarboxamide synthase (Rhodococcus jostii (strain RHA1)).